Consider the following 189-residue polypeptide: Interferon alpha-4 (189 aa).

A signal peptide spans 1–23; it reads MALSFSLLMAVLVLSYKSICSLG. Intrachain disulfides connect C24–C122 and C52–C162.

It belongs to the alpha/beta interferon family.

The protein localises to the secreted. Produced by macrophages, IFN-alpha have antiviral activities. Interferon stimulates the production of two enzymes: a protein kinase and an oligoadenylate synthetase. This chain is Interferon alpha-4 (IFNA4), found in Homo sapiens (Human).